The following is a 500-amino-acid chain: NAD(P)H-quinone oxidoreductase subunit 2, chloroplastic (500 aa).

A run of 13 helical transmembrane segments spans residues 15–35, 42–62, 79–99, 109–129, 132–152, 167–187, 201–221, 247–267, 278–298, 306–326, 334–354, 377–397, and 400–420; these read ILPE…DLSL, WIIY…CLQW, FSIA…LLSI, LMEF…LCGA, LITI…LAGY, LLVG…LYGL, LIFA…CIIV, VVAF…IRII, WQFL…LVAI, MLAY…ISST, LVYM…VILF, ASCL…AGFF, and IYLF…VGLL.

This sequence belongs to the complex I subunit 2 family. In terms of assembly, NDH is composed of at least 16 different subunits, 5 of which are encoded in the nucleus.

It localises to the plastid. It is found in the chloroplast thylakoid membrane. It catalyses the reaction a plastoquinone + NADH + (n+1) H(+)(in) = a plastoquinol + NAD(+) + n H(+)(out). The catalysed reaction is a plastoquinone + NADPH + (n+1) H(+)(in) = a plastoquinol + NADP(+) + n H(+)(out). In terms of biological role, NDH shuttles electrons from NAD(P)H:plastoquinone, via FMN and iron-sulfur (Fe-S) centers, to quinones in the photosynthetic chain and possibly in a chloroplast respiratory chain. The immediate electron acceptor for the enzyme in this species is believed to be plastoquinone. Couples the redox reaction to proton translocation, and thus conserves the redox energy in a proton gradient. In Chaetosphaeridium globosum (Charophycean green alga), this protein is NAD(P)H-quinone oxidoreductase subunit 2, chloroplastic.